Consider the following 170-residue polypeptide: Cathelicidin antimicrobial peptide (170 aa).

An N-terminal signal peptide occupies residues 1 to 30 (MDTQRDSPSLGRWSLVLLLLGLVMPLAIVA). Residues 31–131 (QVLSYQEAVL…DISCDKDNRR (101 aa)) constitute a propeptide, cathelin-like domain (CLD). Cystine bridges form between Cys86/Cys97 and Cys108/Cys125. An active core region spans residues 150-162 (FKRIVQRIKDFLQ).

It belongs to the cathelicidin family. As to quaternary structure, monomer, homodimer or homotrimer (in vitro). Oligomerizes as tetra- or hexamer in solution (in vitro). Proteolytically cleaved by proteinase PRTN3 into antibacterial peptide LL-37. Proteolytically cleaved by cathepsin CTSG and neutrophil elastase ELANE. Post-translationally, resistant to proteolytic degradation in solution, and when bound to both zwitterionic (mimicking mammalian membranes) and negatively charged membranes (mimicking bacterial membranes). In terms of processing, after secretion onto the skin surface, the CAMP gene product is processed by a serine protease-dependent mechanism into multiple novel antimicrobial peptides distinct from and shorter than cathelicidin LL-37. These peptides show enhanced antimicrobial action, acquiring the ability to kill skin pathogens such as S.aureus, E.coli and C.albicans. These peptides have lost the ability to stimulate CXCL8/IL8 release from keratinocytes. The peptides act synergistically, killing bacteria at lower concentrations when present together, and maintain activity at increased salt condition.

Its subcellular location is the secreted. The protein resides in the vesicle. Functionally, antimicrobial protein that is an integral component of the innate immune system. Binds to bacterial lipopolysaccharides (LPS). Acts via neutrophil N-formyl peptide receptors to enhance the release of CXCL2. Postsecretory processing generates multiple cathelicidin antimicrobial peptides with various lengths which act as a topical antimicrobial defense in sweat on skin. The unprocessed precursor form, cathelicidin antimicrobial peptide, inhibits the growth of Gram-negative E.coli and E.aerogenes with efficiencies comparable to that of the mature peptide LL-37 (in vitro). In terms of biological role, antimicrobial peptide that is an integral component of the innate immune system. Binds to bacterial lipopolysaccharides (LPS). Causes membrane permeabilization by forming transmembrane pores (in vitro). Causes lysis of E.coli. Exhibits antimicrobial activity against Gram-negative bacteria such as P.aeruginosa, S.typhimurium, E.aerogenes, E.coli and P.syringae, Gram-positive bacteria such as L.monocytogenes, S.epidermidis, S.pyogenes and S.aureus, as well as vancomycin-resistant enterococci (in vitro). Exhibits antimicrobial activity against methicillin-resistant S.aureus, P.mirabilis, and C.albicans in low-salt media, but not in media containing 100 mM NaCl (in vitro). Forms chiral supramolecular assemblies with quinolone signal (PQS) molecules of P.aeruginosa, which may lead to interference of bacterial quorum signaling and perturbance of bacterial biofilm formation. May form supramolecular fiber-like assemblies on bacterial membranes. Induces cytokine and chemokine producation as well as TNF/TNFA and CSF2/GMCSF production in normal human keratinocytes. Exhibits hemolytic activity against red blood cells. Its function is as follows. Exhibits antimicrobial activity against E.coli and B.megaterium (in vitro). The chain is Cathelicidin antimicrobial peptide from Nomascus leucogenys (Northern white-cheeked gibbon).